Consider the following 272-residue polypeptide: MDHRTPTPDNPWLALRNLTPARIALGRTGTSLPTGAQLDFQFAHAQARDAVHLAFDHAGLASQLSDRGRDSLVLHSAASDRHQYLQRPDLGRRLNEDSIATLRQHTQANPGGVDLAIVVADGLSALAVHRHTLPFLNRFEEQAAADGWTSAPVVLVQQGRVAVADEVGELLGARMTVMLIGERPGLSSPDSLGLYFTYAPKVGLTDAYRNCISNIRLEGLSYGMAAHRLLYLMREACRRQLSGVNLKDEAEVHSLESEGSASQKGNFLLGKG.

The adenosylcob(III)alamin site is built by valine 161, glutamate 182, and cysteine 211.

Belongs to the EutC family. In terms of assembly, the basic unit is a heterodimer which dimerizes to form tetramers. The heterotetramers trimerize; 6 large subunits form a core ring with 6 small subunits projecting outwards. Adenosylcob(III)alamin is required as a cofactor.

It is found in the bacterial microcompartment. The enzyme catalyses ethanolamine = acetaldehyde + NH4(+). The protein operates within amine and polyamine degradation; ethanolamine degradation. In terms of biological role, catalyzes the deamination of various vicinal amino-alcohols to oxo compounds. Allows this organism to utilize ethanolamine as the sole source of nitrogen and carbon in the presence of external vitamin B12. The protein is Ethanolamine ammonia-lyase small subunit of Pseudomonas putida (strain GB-1).